We begin with the raw amino-acid sequence, 1663 residues long: Complement C3 (1663 aa).

The first 22 residues, 1 to 22 (MGPTSGPSLLLLLLTHLPLALG), serve as a signal peptide directing secretion. Phosphoserine; by FAM20C is present on residues Ser-38 and Ser-70. The N-linked (GlcNAc...) asparagine glycan is linked to Asn-85. Phosphoserine; by FAM20C is present on residues Ser-297 and Ser-303. Disulfide bonds link Cys-559/Cys-816, Cys-627/Cys-662, Cys-693/Cys-720, Cys-694/Cys-727, Cys-707/Cys-728, Cys-873/Cys-1513, Cys-1101/Cys-1158, Cys-1358/Cys-1489, Cys-1389/Cys-1458, Cys-1506/Cys-1511, Cys-1518/Cys-1590, Cys-1537/Cys-1661, and Cys-1637/Cys-1646. A Phosphoserine; by FAM20C modification is found at Ser-672. The region spanning 693–728 (CCEDGMRENPMRFSCQRRTRFISLGEACKKVFLDCC) is the Anaphylatoxin-like domain. Residue Asn-939 is glycosylated (N-linked (GlcNAc...) asparagine). The disordered stretch occupies residues 954–973 (REGVQKEDIPPADLSDQVPD). Position 968 is a phosphoserine; by FAM20C (Ser-968). Residues 1010-1013 (CGEQ) constitute a cross-link (isoglutamyl cysteine thioester (Cys-Gln)). At Ser-1321 the chain carries Phosphoserine; by FAM20C. The NTR domain maps to 1518-1661 (CFIQKSDDKV…FTESMVVFGC (144 aa)). Ser-1573 is subject to Phosphoserine; by FAM20C. N-linked (GlcNAc...) asparagine glycosylation is present at Asn-1617. Residues 1634–1659 (EDECQDEENQKQCQDLGAFTESMVVF) are interaction with CFP/properdin.

In terms of assembly, in absence of complement activation, the C3 precursor is first processed by the removal of 4 Arg residues, forming two chains, beta and alpha, linked by a disulfide bond. As to quaternary structure, complement C3b is composed of complement C3b and complement C3 beta chains that are associated via disulfide bonds. Non-enzymatic component of the C5 convertase, also named C4bC2bC3b, composed of the serine protease complement C2b (C2), complement C3b, as well as complement C4b (C4). Non-enzymatic component of the C5 convertase of the alternative complement pathways composed of the serine protease complement CFB and complement C3b. Interacts with CFP; interaction takes place together with CFB in the alternative complement system and allows the complex to become active. Interacts with CR1 (via Sushi 8 and Sushi 9 domains). Interacts with CFH. Interacts with CFH. Interacts with CR2. In terms of assembly, during pregnancy, C3dg exists as a complex (probably a 2:2:2 heterohexamer) with AGT and the proform of PRG2. Interacts with CR2 (via the N-terminal Sushi domains 1 and 2). As to quaternary structure, (Microbial infection) C3b interacts with herpes simplex virus 1 (HHV-1) and herpes simplex virus 2 (HHV-2) envelope glycoprotein C; this interaction inhibits the activation of the complement system. (Microbial infection) Interacts with Staphylococcus aureus immunoglobulin-binding protein Sbi; this interaction prevents the association between C3dg and CR2. In terms of assembly, (Microbial infection) Interacts with Staphylococcus aureus protein Fib. In terms of processing, C3 precursor is first processed by the removal of 4 Arg residues, forming two chains, beta and alpha, linked by a disulfide bond. During activation of the complement systems, the alpha chain is cleaved into C3a and C3b by the C3 convertase: C3b stays linked to the beta chain, while C3a is released in the plasma. The alpha chain is cleaved by the serine protease complement C2b component of the C3 convertase to generate C3a and C3b following activation by the classical, lectin and GZMK complement systems. The alpha chain is cleaved by CFB component of the C3 convertase to generate C3a and C3b following activation by the alternative complement system. Post-translationally, C3a is further processed by carboxypeptidases to release the C-terminal arginine residue generating the acylation stimulating protein (ASP). Levels of ASP are increased in adipocytes in the postprandial period and by insulin and dietary chylomicrons. Complement C3b is rapidly split in two positions by factor I (CFI) and a cofactor (CFH) to form iC3b (inactivated C3b) and C3f which is released. CFI and CFH catalyze proteolytic degradation of already-deposited complement C3b. Then iC3b is slowly cleaved (possibly by CFI) to form C3c (beta chain + alpha' chain fragment 1 + alpha' chain fragment 2), C3dg and C3f. Other proteases produce other fragments such as C3d or C3g. In terms of processing, upon activation, the internal thioester bond reacts with carbohydrate antigens on the target surface to form amide or ester bonds, leading to covalent association with the surface of pathogens. Post-translationally, complement C3b interacts with complement C4b via a thioester linkage. Phosphorylated by FAM20C in the extracellular medium. In terms of processing, (Microbial infection) C3 is cleaved by Staphylococcus aureus aureolysin; this cleavage renders C3a and C3b inactive. C3b is rapidly degraded by host factors CFH and CFI preventing its deposition on the bacterial surface while C3a is further inactivated by aureolysin. Post-translationally, (Microbial infection) Complement C3 beta chain is cleaved and inactivated by S.pyogenes SpeB. (Microbial infection) Cleaved by N.meningitidis NalP between Leu-744 and Gly-745, generating a slightly shorter C3 alpha form and a slightly longer C3 beta form. The C3b-like fragment is degraded in the presence of the complement regulators CFH and CFI, preventing its deposition on the bacterial surface. In terms of tissue distribution, plasma. As to expression, produced in adipocytes and released into the plasma during both the fasting and postprandial periods.

It localises to the secreted. The protein resides in the cell surface. With respect to regulation, complement activation is inhibited by VSIG4. In terms of biological role, precursor of non-enzymatic components of the classical, alternative, lectin and GZMK complement pathways, which consist in a cascade of proteins that leads to phagocytosis and breakdown of pathogens and signaling that strengthens the adaptive immune system. Non-enzymatic component of C5 convertase. Generated following cleavage by C3 convertase, it covalently attaches to the surface of pathogens, where it acts as an opsonin that marks the surface of antigens for removal. Complement C3b binds covalently via its reactive thioester, to cell surface carbohydrates or immune aggregates. Together with complement C4b, it then recruits the serine protease complement C2b to form the C5 convertase, which cleaves and activate C5, the next component of the complement pathways. In the alternative complement pathway, recruits the serine protease CFB to form the C5 convertase that cleaves and activates C5. Its function is as follows. Mediator of local inflammatory process released following cleavage by C3 convertase. Acts by binding to its receptor, C3AR1, activating G protein-coupled receptor signaling, promoting the phosphorylation, ARRB2-mediated internalization and endocytosis of C3AR1. C3a anaphylatoxin stimulates the activation of immune cells such as mast cells and basophilic leukocytes to release inflammation agents, such as cytokines, chemokines and histamine, which promote inflammation development. Also acts as potent chemoattractant for the migration of macrophages and neutrophils to the inflamed tissues, resulting in neutralization of the inflammatory triggers by multiple ways, such as phagocytosis and generation of reactive oxidants. Functionally, adipogenic hormone that stimulates triglyceride synthesis and glucose transport in adipocytes, regulating fat storage and playing a role in postprandial triglyceride clearance. Appears to stimulate triglyceride synthesis via activation of the PLC, MAPK and AKT signaling pathways. Acts by binding to its receptor, C5AR2, activating G protein-coupled receptor signaling, promoting the phosphorylation, ARRB2-mediated internalization and endocytosis of C5AR2. In terms of biological role, acts as a chemoattractant for neutrophils in chronic inflammation. The polypeptide is Complement C3 (Homo sapiens (Human)).